The chain runs to 489 residues: Rhamnulokinase (489 aa).

13 to 17 (ASSGR) is an ATP binding site. A disulfide bond links C68 and C222. Substrate is bound by residues G83 and 236–238 (HDT). D237 serves as the catalytic Proton acceptor. T259 provides a ligand contact to ATP. N296 provides a ligand contact to substrate. Residue Q304 coordinates ATP. C353 and C370 are disulfide-bonded. Position 402 (G402) interacts with ATP. C413 and C417 are joined by a disulfide.

Belongs to the rhamnulokinase family. Monomer. It depends on Mg(2+) as a cofactor.

The catalysed reaction is L-rhamnulose + ATP = L-rhamnulose 1-phosphate + ADP + H(+). Its pathway is carbohydrate degradation; L-rhamnose degradation; glycerone phosphate from L-rhamnose: step 2/3. Involved in the catabolism of L-rhamnose (6-deoxy-L-mannose). Catalyzes the transfer of the gamma-phosphate group from ATP to the 1-hydroxyl group of L-rhamnulose to yield L-rhamnulose 1-phosphate. In Escherichia coli O139:H28 (strain E24377A / ETEC), this protein is Rhamnulokinase.